Consider the following 150-residue polypeptide: Macrodomain Ter protein (150 aa).

The protein belongs to the MatP family. In terms of assembly, homodimer.

The protein resides in the cytoplasm. Functionally, required for spatial organization of the terminus region of the chromosome (Ter macrodomain) during the cell cycle. Prevents early segregation of duplicated Ter macrodomains during cell division. Binds specifically to matS, which is a 13 bp signature motif repeated within the Ter macrodomain. This Escherichia coli O6:K15:H31 (strain 536 / UPEC) protein is Macrodomain Ter protein.